Consider the following 242-residue polypeptide: Ubiquitin-conjugating enzyme E2 6 (242 aa).

Residues 1–217 (MASRQAYKRL…QPAGNGTTSN (217 aa)) are Cytoplasmic-facing. The region spanning 5-163 (QAYKRLSKEY…FPELAEQNRR (159 aa)) is the UBC core domain. The active-site Glycyl thioester intermediate is the C87. Residues 218 to 240 (SIGRSLLFVLFSLAALLVAVCYT) traverse the membrane as a helical segment.

This sequence belongs to the ubiquitin-conjugating enzyme family.

Its subcellular location is the endoplasmic reticulum membrane. It carries out the reaction S-ubiquitinyl-[E1 ubiquitin-activating enzyme]-L-cysteine + [E2 ubiquitin-conjugating enzyme]-L-cysteine = [E1 ubiquitin-activating enzyme]-L-cysteine + S-ubiquitinyl-[E2 ubiquitin-conjugating enzyme]-L-cysteine.. The protein operates within protein modification; protein ubiquitination. Its function is as follows. Catalyzes the covalent attachment of ubiquitin to other proteins. Functions in degradation of misfolded or regulated proteins localized in the endoplasmic reticulum (ER) lumen or membrane via the ubiquitin-proteasome system. Cognate E2 conjugating enzyme for the DOA10 ubiquitin ligase complex, which is part of the ERAD-C pathway responsible for the rapid degradation of membrane proteins with misfolded cytoplasmic domains. This Eremothecium gossypii (strain ATCC 10895 / CBS 109.51 / FGSC 9923 / NRRL Y-1056) (Yeast) protein is Ubiquitin-conjugating enzyme E2 6 (UBC6).